Reading from the N-terminus, the 1255-residue chain is Pre-mRNA-splicing factor ATP-dependent RNA helicase DEAH7 (1255 aa).

Positions 1 to 316 (MGVDPFKTTE…SDEDRSQGAE (316 aa)) are disordered. The segment covering 13-60 (EADKETNGGVPVKDKLTFKAPERKSRLGLDARAIEKKDNAKTEGEFKV) has biased composition (basic and acidic residues). Residues 109–137 (AQESTVTTENAGTSDISITPRTLSCTSSY) show a composition bias toward polar residues. Short sequence motifs (nuclear localization signal) lie at residues 144 to 153 (RHREEHRRDR) and 172 to 191 (RRRESYRQSDRDYHGEKRRR). Positions 144–219 (RHREEHRRDR…EWERSPHGDR (76 aa)) are enriched in basic and acidic residues. 2 stretches are compositionally biased toward low complexity: residues 220–240 (GSSYSRRPQPSPSPMLAAASP) and 271–290 (PIRASGSSIRSSSSRYGGRS). Residues 297–316 (REGDLTNEGHSDEDRSQGAE) are compositionally biased toward basic and acidic residues. The Helicase ATP-binding domain occupies 568 to 731 (LQVIRENQVI…FGSVPIFNIP (164 aa)). 581 to 588 (GETGSGKT) provides a ligand contact to ATP. Residues 678 to 681 (DEAH) carry the DEAH box motif. Residues 753–933 (AVKQAMTIHI…NVVLLLKSLK (181 aa)) enclose the Helicase C-terminal domain. Basic and acidic residues predominate over residues 1190 to 1224 (LEHKKKQKEEKSGMEEEMEKLRRDQVESELRSKER). The interval 1190–1255 (LEHKKKQKEE…TFLRPKKLGL (66 aa)) is disordered.

It belongs to the DEAD box helicase family. DEAH subfamily. PRP16 sub-subfamily. As to quaternary structure, interacts with the Phytophthora PSR1 protein.

The protein localises to the nucleus. It catalyses the reaction ATP + H2O = ADP + phosphate + H(+). Functionally, involved in pre-mRNA splicing by mediating structural transitions of the spliceosome during the catalytic step. Facilitates expression of genes involved in auxin-mediated development including male-gametophyte transmission, apical-basal patterning of embryonic and gynoecium development, stamen development, phyllotactic flower positioning, and vascular development. Also involved in root-meristem maintenance and planar polarity of root-hair positioning. Acts as a component of RNA silencing that regulates distinct classes of endogenous small RNAs. Functions as a positive regulator of plant immunity. The polypeptide is Pre-mRNA-splicing factor ATP-dependent RNA helicase DEAH7 (Arabidopsis thaliana (Mouse-ear cress)).